The primary structure comprises 170 residues: Adenine phosphoribosyltransferase (170 aa).

It belongs to the purine/pyrimidine phosphoribosyltransferase family. As to quaternary structure, homodimer.

It localises to the cytoplasm. It carries out the reaction AMP + diphosphate = 5-phospho-alpha-D-ribose 1-diphosphate + adenine. It participates in purine metabolism; AMP biosynthesis via salvage pathway; AMP from adenine: step 1/1. Its function is as follows. Catalyzes a salvage reaction resulting in the formation of AMP, that is energically less costly than de novo synthesis. The sequence is that of Adenine phosphoribosyltransferase from Acaryochloris marina (strain MBIC 11017).